The sequence spans 227 residues: E3 ubiquitin-protein ligase ZNRF1 (227 aa).

The tract at residues 1–42 (MGGKQSTAARSRGPFPGVSTDDSAVPPPGGAPHFGHYRTGGG) is disordered. Glycine 2 carries the N-myristoyl glycine lipid modification. Residues 2–10 (GGKQSTAAR) are required for endosomal and lysosomal localization and myristoylation. Serine 50, serine 52, and serine 53 each carry phosphoserine. The disordered stretch occupies residues 68 to 105 (PFGLYTPASRGTGDSERAPGGGGSASDSTYAHGNGYQE). Phosphotyrosine; by SRC is present on tyrosine 103. A Phosphoserine modification is found at serine 123. An RING-type; atypical zinc finger spans residues 184–225 (CVICLEELLQGDTIARLPCLCIYHKSCIDSWFEVNRSCPEHP).

In terms of assembly, interacts with AKT1, GLUL and TUBB2A. Interacts with ZNRF2. Interacts (via its RING domain) with UBE2N. Interacts (when phosphorylated) with YWHAE. Post-translationally, N-myristoylation targets ZNRF1 to intracellular membranes. Phosphorylated by SRC at Tyr-103; leading to 'Lys-63'-linked ubiquitination of TLR3, lysosomal trafficking and degradation. As to expression, expressed primarily in the nervous system, with expression higher in developing brain relative to adult. Expressed at low levels in testis and thymus.

The protein localises to the endosome. It localises to the lysosome. It is found in the membrane. The protein resides in the cytoplasmic vesicle. Its subcellular location is the secretory vesicle. The protein localises to the synaptic vesicle membrane. It carries out the reaction S-ubiquitinyl-[E2 ubiquitin-conjugating enzyme]-L-cysteine + [acceptor protein]-L-lysine = [E2 ubiquitin-conjugating enzyme]-L-cysteine + N(6)-ubiquitinyl-[acceptor protein]-L-lysine.. It functions in the pathway protein modification; protein ubiquitination. Its function is as follows. E3 ubiquitin-protein ligase that plays a role in different processes including cell differentiation, receptor recycling or regulation of inflammation. Mediates the ubiquitination of AKT1 and GLUL, thereby playing a role in neuron cells differentiation. Plays a role in the establishment and maintenance of neuronal transmission and plasticity. Regulates Schwann cells differentiation by mediating ubiquitination of GLUL. Promotes neurodegeneration by mediating 'Lys-48'-linked polyubiquitination and subsequent degradation of AKT1 in axons: degradation of AKT1 prevents AKT1-mediated phosphorylation of GSK3B, leading to GSK3B activation and phosphorylation of DPYSL2/CRMP2 followed by destabilization of microtubule assembly in axons. Ubiquitinates the Na(+)/K(+) ATPase alpha-1 subunit/ATP1A1 and thereby influences its endocytosis and/or degradation. Controls ligand-induced EGFR signaling via mediating receptor ubiquitination and recruitment of the ESCRT machinery. Acts as a negative feedback mechanism controlling TLR3 trafficking by mediating TLR3 'Lys-63'-linked polyubiquitination to reduce type I IFN production. Modulates inflammation by promoting caveolin-1/CAV1 ubiquitination and degradation to regulate TLR4-activated immune response. In Homo sapiens (Human), this protein is E3 ubiquitin-protein ligase ZNRF1 (ZNRF1).